The sequence spans 220 residues: Deoxyribose-phosphate aldolase (220 aa).

D89 acts as the Proton donor/acceptor in catalysis. K151 (schiff-base intermediate with acetaldehyde) is an active-site residue. The Proton donor/acceptor role is filled by K180.

The protein belongs to the DeoC/FbaB aldolase family. DeoC type 1 subfamily.

The protein resides in the cytoplasm. The enzyme catalyses 2-deoxy-D-ribose 5-phosphate = D-glyceraldehyde 3-phosphate + acetaldehyde. It functions in the pathway carbohydrate degradation; 2-deoxy-D-ribose 1-phosphate degradation; D-glyceraldehyde 3-phosphate and acetaldehyde from 2-deoxy-alpha-D-ribose 1-phosphate: step 2/2. Its function is as follows. Catalyzes a reversible aldol reaction between acetaldehyde and D-glyceraldehyde 3-phosphate to generate 2-deoxy-D-ribose 5-phosphate. The polypeptide is Deoxyribose-phosphate aldolase (Streptococcus pneumoniae (strain 70585)).